We begin with the raw amino-acid sequence, 359 residues long: Aromatic amino acid aminotransferase (359 aa).

Residue K223 is modified to N6-(pyridoxal phosphate)lysine.

The protein belongs to the class-II pyridoxal-phosphate-dependent aminotransferase family. In terms of assembly, homodimer. Pyridoxal 5'-phosphate serves as cofactor.

It carries out the reaction an aromatic L-alpha-amino acid + 2-oxoglutarate = an aromatic oxo-acid + L-glutamate. Its function is as follows. Aminotransferase that catalyzes the conversion of aromatic amino acids and 2-oxoglutarate into corresponding aromatic oxo acids and L-glutamate. The polypeptide is Aromatic amino acid aminotransferase (Streptomyces avermitilis (strain ATCC 31267 / DSM 46492 / JCM 5070 / NBRC 14893 / NCIMB 12804 / NRRL 8165 / MA-4680)).